The chain runs to 191 residues: Large ribosomal subunit protein bL12cz (191 aa).

A chloroplast-targeting transit peptide spans 1–58 (MASTTLSIATTIRSSSYPTLASINHFPSRTTTIEFPSRFGGGSSSTLTHRATHLRPIA).

This sequence belongs to the bacterial ribosomal protein bL12 family.

Its subcellular location is the plastid. The protein resides in the chloroplast. This chain is Large ribosomal subunit protein bL12cz (RPL12A), found in Arabidopsis thaliana (Mouse-ear cress).